The sequence spans 556 residues: Formate--tetrahydrofolate ligase (556 aa).

ATP is bound at residue 65–72 (TPAGEGKS).

This sequence belongs to the formate--tetrahydrofolate ligase family.

The enzyme catalyses (6S)-5,6,7,8-tetrahydrofolate + formate + ATP = (6R)-10-formyltetrahydrofolate + ADP + phosphate. The protein operates within one-carbon metabolism; tetrahydrofolate interconversion. The sequence is that of Formate--tetrahydrofolate ligase from Streptococcus mutans serotype c (strain ATCC 700610 / UA159).